The following is a 304-amino-acid chain: HPr kinase/phosphorylase (304 aa).

Residues His136 and Lys157 contribute to the active site. 151–158 provides a ligand contact to ATP; sequence GESGIGKS. Ser158 is a binding site for Mg(2+). Catalysis depends on Asp175, which acts as the Proton acceptor; for phosphorylation activity. Proton donor; for dephosphorylation activity. The segment at 198–207 is important for the catalytic mechanism of both phosphorylation and dephosphorylation; sequence LEVRGIGIID. Position 199 (Glu199) interacts with Mg(2+). Arg240 is an active-site residue. The important for the catalytic mechanism of dephosphorylation stretch occupies residues 261-266; the sequence is PVRPGR.

This sequence belongs to the HPrK/P family. As to quaternary structure, homohexamer. It depends on Mg(2+) as a cofactor.

The catalysed reaction is [HPr protein]-L-serine + ATP = [HPr protein]-O-phospho-L-serine + ADP + H(+). It catalyses the reaction [HPr protein]-O-phospho-L-serine + phosphate + H(+) = [HPr protein]-L-serine + diphosphate. Catalyzes the ATP- as well as the pyrophosphate-dependent phosphorylation of a specific serine residue in HPr, a phosphocarrier protein of the phosphoenolpyruvate-dependent sugar phosphotransferase system (PTS). HprK/P also catalyzes the pyrophosphate-producing, inorganic phosphate-dependent dephosphorylation (phosphorolysis) of seryl-phosphorylated HPr (P-Ser-HPr). The two antagonistic activities of HprK/P are regulated by several intracellular metabolites, which change their concentration in response to the absence or presence of rapidly metabolisable carbon sources (glucose, fructose, etc.) in the growth medium. Therefore, by controlling the phosphorylation state of HPr, HPrK/P is a sensor enzyme that plays a major role in the regulation of carbon metabolism and sugar transport: it mediates carbon catabolite repression (CCR), and regulates PTS-catalyzed carbohydrate uptake and inducer exclusion. The chain is HPr kinase/phosphorylase from Clostridium botulinum (strain Eklund 17B / Type B).